The chain runs to 150 residues: Myosin, essential light chain (150 aa).

EF-hand domains are found at residues 3-38 (ASAD…LGKS) and 75-110 (EQQK…LGDY). The Ca(2+) site is built by Asp-16, Asp-18, Asp-20, Lys-22, and Asp-27.

In terms of assembly, myosin is a hexamer of 2 heavy chains and 4 light chains (two regulatory light chains and two essential light chains).

The chain is Myosin, essential light chain (mlcE) from Dictyostelium discoideum (Social amoeba).